The sequence spans 496 residues: Probable cytosol aminopeptidase (496 aa).

Mn(2+)-binding residues include Lys-258 and Asp-263. Residue Lys-270 is part of the active site. Asp-281, Asp-340, and Glu-342 together coordinate Mn(2+). Residue Arg-344 is part of the active site.

The protein belongs to the peptidase M17 family. Mn(2+) is required as a cofactor.

It localises to the cytoplasm. It catalyses the reaction Release of an N-terminal amino acid, Xaa-|-Yaa-, in which Xaa is preferably Leu, but may be other amino acids including Pro although not Arg or Lys, and Yaa may be Pro. Amino acid amides and methyl esters are also readily hydrolyzed, but rates on arylamides are exceedingly low.. It carries out the reaction Release of an N-terminal amino acid, preferentially leucine, but not glutamic or aspartic acids.. Its function is as follows. Presumably involved in the processing and regular turnover of intracellular proteins. Catalyzes the removal of unsubstituted N-terminal amino acids from various peptides. This chain is Probable cytosol aminopeptidase, found in Helicobacter pylori (strain HPAG1).